The following is a 357-amino-acid chain: Malonyl CoA reductase (NADP) (357 aa).

Residue 13-16 (TGLV) participates in NADP(+) binding. Cys-150 functions as the Acyl-thioester intermediate in the catalytic mechanism. 180–181 (SG) provides a ligand contact to NADP(+). His-245 (proton acceptor) is an active-site residue. 332-333 (NT) lines the NADP(+) pocket.

The protein belongs to the aspartate-semialdehyde dehydrogenase family. Homotetramer.

The catalysed reaction is 3-oxopropanoate + NADP(+) + CoA = malonyl-CoA + NADPH + H(+). In terms of biological role, catalyzes the reduction of malonyl-CoA to malonate semialdehyde, a key step in the 3-hydroxypropanoate and the 3-hydroxypropanoate/4-hydroxybutyrate cycles. This is Malonyl CoA reductase (NADP) from Metallosphaera sedula (strain ATCC 51363 / DSM 5348 / JCM 9185 / NBRC 15509 / TH2).